Reading from the N-terminus, the 226-residue chain is Ribonuclease 3 (226 aa).

In terms of domain architecture, RNase III spans 7 to 129 (LPRLCRTLGY…IIGAIYLDSD (123 aa)). Glu42 contacts Mg(2+). Residue Asp46 is part of the active site. Mg(2+) is bound by residues Asp115 and Glu118. Residue Glu118 is part of the active site. The region spanning 156–226 (DAKTLLQEYL…AAQVLELLKK (71 aa)) is the DRBM domain.

It belongs to the ribonuclease III family. Homodimer. Mg(2+) serves as cofactor.

It is found in the cytoplasm. The catalysed reaction is Endonucleolytic cleavage to 5'-phosphomonoester.. In terms of biological role, digests double-stranded RNA. Involved in the processing of primary rRNA transcript to yield the immediate precursors to the large and small rRNAs (23S and 16S). Processes some mRNAs, and tRNAs when they are encoded in the rRNA operon. Processes pre-crRNA and tracrRNA of type II CRISPR loci if present in the organism. This is Ribonuclease 3 from Shewanella sp. (strain MR-7).